A 402-amino-acid polypeptide reads, in one-letter code: Homoserine O-acetyltransferase (402 aa).

Residues 38–359 (NAVLVCHALT…HGHDAFLVEP (322 aa)) form the AB hydrolase-1 domain. Ser-146 (nucleophile) is an active-site residue. Arg-217 contributes to the substrate binding site. Catalysis depends on residues Asp-319 and His-352. Position 353 (Asp-353) interacts with substrate.

The protein belongs to the AB hydrolase superfamily. MetX family. As to quaternary structure, homodimer.

Its subcellular location is the cytoplasm. It catalyses the reaction L-homoserine + acetyl-CoA = O-acetyl-L-homoserine + CoA. It functions in the pathway amino-acid biosynthesis; L-methionine biosynthesis via de novo pathway; O-acetyl-L-homoserine from L-homoserine: step 1/1. Functionally, transfers an acetyl group from acetyl-CoA to L-homoserine, forming acetyl-L-homoserine. The polypeptide is Homoserine O-acetyltransferase (Haloarcula marismortui (strain ATCC 43049 / DSM 3752 / JCM 8966 / VKM B-1809) (Halobacterium marismortui)).